A 300-amino-acid polypeptide reads, in one-letter code: Ribosomal protein bS6--L-glutamate ligase (300 aa).

An ATP-grasp domain is found at 104-287 (MQLLARQGID…IAGKMIRWIE (184 aa)). Residues Lys-141, 178-179 (EY), Asp-187, and 211-213 (RSN) each bind ATP. Positions 248, 260, and 262 each coordinate Mg(2+). Asp-248, Glu-260, and Asn-262 together coordinate Mn(2+).

Belongs to the RimK family. Mg(2+) is required as a cofactor. Mn(2+) serves as cofactor.

Functionally, an L-glutamate ligase that catalyzes the ATP-dependent post-translational addition of glutamate residues to the C-terminus of ribosomal protein bS6 (RpsF). Is also able to catalyze the synthesis of poly-alpha-glutamate in vitro, via ATP hydrolysis from unprotected glutamate as substrate. The number of glutamate residues added to either RpsF or to poly-alpha-glutamate changes with pH. The polypeptide is Ribosomal protein bS6--L-glutamate ligase (Shigella dysenteriae serotype 1 (strain Sd197)).